The chain runs to 412 residues: Serine hydroxymethyltransferase (412 aa).

Residues Leu117 and 121-123 (GHL) each bind (6S)-5,6,7,8-tetrahydrofolate. Lys226 bears the N6-(pyridoxal phosphate)lysine mark. 349–351 (SPF) contributes to the (6S)-5,6,7,8-tetrahydrofolate binding site.

It belongs to the SHMT family. Homodimer. Requires pyridoxal 5'-phosphate as cofactor.

It localises to the cytoplasm. The enzyme catalyses (6R)-5,10-methylene-5,6,7,8-tetrahydrofolate + glycine + H2O = (6S)-5,6,7,8-tetrahydrofolate + L-serine. Its pathway is one-carbon metabolism; tetrahydrofolate interconversion. It participates in amino-acid biosynthesis; glycine biosynthesis; glycine from L-serine: step 1/1. Catalyzes the reversible interconversion of serine and glycine with tetrahydrofolate (THF) serving as the one-carbon carrier. This reaction serves as the major source of one-carbon groups required for the biosynthesis of purines, thymidylate, methionine, and other important biomolecules. Also exhibits THF-independent aldolase activity toward beta-hydroxyamino acids, producing glycine and aldehydes, via a retro-aldol mechanism. This is Serine hydroxymethyltransferase from Geobacillus kaustophilus (strain HTA426).